A 130-amino-acid polypeptide reads, in one-letter code: KIFEDPTTSYKYSISMTTRHMREGEIDGVDYFFKTKEEFEALIKDDQFIEYAQYVGNYYGTPVQYVKDTMEEGHDVFLEIEVEGAKQVRKKFPDALFIFLAPPSLDDLKERLVGRGTESDEKIQSRVNEA.

The Guanylate kinase-like domain occupies 1–130 (KIFEDPTTSY…EKIQSRVNEA (130 aa)).

The protein belongs to the guanylate kinase family.

It localises to the cytoplasm. The catalysed reaction is GMP + ATP = GDP + ADP. In terms of biological role, essential for recycling GMP and indirectly, cGMP. The sequence is that of Guanylate kinase (gmk) from Staphylococcus epidermidis.